The chain runs to 252 residues: E3 ubiquitin-protein ligase MARCHF3 (252 aa).

Residues S62–E122 form an RING-CH-type zinc finger. The Zn(2+) site is built by C70, C73, C86, C88, H96, C99, C112, and C115. Transmembrane regions (helical) follow at residues L144–L164 and A181–V201.

The protein localises to the cytoplasmic vesicle membrane. It is found in the early endosome membrane. The enzyme catalyses S-ubiquitinyl-[E2 ubiquitin-conjugating enzyme]-L-cysteine + [acceptor protein]-L-lysine = [E2 ubiquitin-conjugating enzyme]-L-cysteine + N(6)-ubiquitinyl-[acceptor protein]-L-lysine.. It functions in the pathway protein modification; protein ubiquitination. In terms of biological role, E3 ubiquitin-protein ligase which may be involved in endosomal trafficking. E3 ubiquitin ligases accept ubiquitin from an E2 ubiquitin-conjugating enzyme in the form of a thioester and then directly transfer the ubiquitin to targeted substrates. The sequence is that of E3 ubiquitin-protein ligase MARCHF3 (marchf3) from Xenopus laevis (African clawed frog).